A 143-amino-acid chain; its full sequence is Transcriptional regulator MraZ (143 aa).

SpoVT-AbrB domains are found at residues 5-47 and 76-119; these read EYHH…SMEE and AMES…AKER.

Belongs to the MraZ family. In terms of assembly, forms oligomers.

Its subcellular location is the cytoplasm. It is found in the nucleoid. The chain is Transcriptional regulator MraZ from Lactobacillus helveticus (strain DPC 4571).